The sequence spans 913 residues: Rab GTPase-activating protein tbc-8 (913 aa).

The segment at 1–24 (MQMFRHSSADMWRAKKPTLERRST) is disordered. Positions 106 to 240 (NLNSPYVTSL…TYRRMSNRIE (135 aa)) constitute an RUN domain. The Rab-GAP TBC domain occupies 597–844 (INTKEVRRMA…KVWEVIWAAQ (248 aa)).

It belongs to the RUTBC family. Interacts with rab-19. Interacts with ric-19; the interaction is direct and may be required for the activation of rab-2 and dense vesicle maturation in cholinergic motoneurons. Interacts (via RUN domain) with rund-1. Does not interact with unc-108 (GTP-bound form). As to expression, expressed in neurons in the head, tail and ventral nerve cord (at protein level).

The protein localises to the golgi apparatus. Its subcellular location is the trans-Golgi network. The protein resides in the early endosome. It is found in the cytoplasmic vesicle membrane. Interacts with numerous Rab family members, functioning as Rab effector for some, and as GTPase activator for others. GTPase activator for rab-2. In association with ric-19 activates rab-2 during dense core vesicle maturation in cholinergic motoneurons. In Caenorhabditis elegans, this protein is Rab GTPase-activating protein tbc-8.